Here is a 199-residue protein sequence, read N- to C-terminus: Probable GTP-binding protein EngB (199 aa).

The region spanning 22-195 is the EngB-type G domain; the sequence is QLPEIALSGR…WEWIEQQCDI (174 aa). GTP is bound by residues 30–37, 57–61, 75–78, 142–145, and 174–176; these read GRSNVGKS, GKTQT, DVPG, TKMD, and FSA. Mg(2+) contacts are provided by Ser37 and Thr59.

This sequence belongs to the TRAFAC class TrmE-Era-EngA-EngB-Septin-like GTPase superfamily. EngB GTPase family. Requires Mg(2+) as cofactor.

In terms of biological role, necessary for normal cell division and for the maintenance of normal septation. The chain is Probable GTP-binding protein EngB from Latilactobacillus sakei subsp. sakei (strain 23K) (Lactobacillus sakei subsp. sakei).